The primary structure comprises 470 residues: Glutamate--tRNA ligase 2 (470 aa).

A 'HIGH' region motif is present at residues 11 to 21 (PSPTGHLHLGG). Residues 238–242 (KLSKR) carry the 'KMSKS' region motif. An ATP-binding site is contributed by Lys-241.

The protein belongs to the class-I aminoacyl-tRNA synthetase family. Glutamate--tRNA ligase type 1 subfamily. As to quaternary structure, monomer.

The protein localises to the cytoplasm. It catalyses the reaction tRNA(Glu) + L-glutamate + ATP = L-glutamyl-tRNA(Glu) + AMP + diphosphate. Functionally, catalyzes the attachment of glutamate to tRNA(Glu) in a two-step reaction: glutamate is first activated by ATP to form Glu-AMP and then transferred to the acceptor end of tRNA(Glu). The protein is Glutamate--tRNA ligase 2 of Ehrlichia ruminantium (strain Gardel).